Here is a 163-residue protein sequence, read N- to C-terminus: MPKAPDYSELSDSCTLAGGTARFSGPLHRAWRMMNFRQRMGWIGVGLYLLASAAAFYYVFEINETYNRLALEHIQQHPEEPREGTTWTHSLKARLLSLPFWLWTVIFLIPYLQMFLFLYSCTRADPKTVGYCIIPICLAIICNRHQAFVKASNQISRLQLIDT.

The next 2 helical transmembrane spans lie at 40–60 (MGWIGVGLYLLASAAAFYYVF) and 100–119 (FWLWTVIFLIPYLQMFLFLY).

This sequence belongs to the LYSET family. In terms of assembly, interacts with GNPTAB; this interaction is important for proper localization of GNPTAB in Golgi stacks. Interacts with MBTPS1.

Its subcellular location is the golgi apparatus membrane. In terms of biological role, required for mannose-6-phosphate-dependent trafficking of lysosomal enzymes. LYSET bridges GlcNAc-1-phosphate transferase (GNPTAB), to the membrane-bound transcription factor site-1 protease (MBTPS1), thus allowing proteolytic activation of the GNPTAB. GNPTAB is involved in the regulation of M6P-dependent Golgi-to-lysosome trafficking of lysosomal enzymes. LYSET is thus an essential factor for maturation and delivery of lysosomal hydrolases. The protein is Lysosomal enzyme trafficking factor (Lyset) of Rattus norvegicus (Rat).